A 430-amino-acid polypeptide reads, in one-letter code: Glutamate-1-semialdehyde 2,1-aminomutase (430 aa).

An N6-(pyridoxal phosphate)lysine modification is found at Lys266.

The protein belongs to the class-III pyridoxal-phosphate-dependent aminotransferase family. HemL subfamily. In terms of assembly, homodimer. Pyridoxal 5'-phosphate serves as cofactor.

Its subcellular location is the cytoplasm. It catalyses the reaction (S)-4-amino-5-oxopentanoate = 5-aminolevulinate. It participates in porphyrin-containing compound metabolism; protoporphyrin-IX biosynthesis; 5-aminolevulinate from L-glutamyl-tRNA(Glu): step 2/2. The chain is Glutamate-1-semialdehyde 2,1-aminomutase from Acidithiobacillus ferrooxidans (strain ATCC 23270 / DSM 14882 / CIP 104768 / NCIMB 8455) (Ferrobacillus ferrooxidans (strain ATCC 23270)).